The following is a 20-amino-acid chain: Endo-1,6-beta-glucanase (20 aa).

This sequence belongs to the glycosyl hydrolase 5 (cellulase A) family.

Its subcellular location is the secreted. It is found in the extracellular space. It carries out the reaction Random hydrolysis of (1-&gt;6)-linkages in (1-&gt;6)-beta-D-glucans.. Endo-1,6-beta-glucanase that has highest activity against the beta-1,6-glucan pustulan. Also active against the beta-1,6-glucan lutean. Lower activity against laminarin (beta-1,3-glucan with beta-1,6-branches). Little or no activity against gentiobiose, yeast glucan, lichenin, scleroglucan, curdlan, barley glucan, CM cellulose, HE cellulose, pachyman and pullulan. In Acremonium sp, this protein is Endo-1,6-beta-glucanase.